A 121-amino-acid chain; its full sequence is Peptidyl-tRNA hydrolase (121 aa).

This sequence belongs to the PTH2 family.

It localises to the cytoplasm. It carries out the reaction an N-acyl-L-alpha-aminoacyl-tRNA + H2O = an N-acyl-L-amino acid + a tRNA + H(+). Functionally, the natural substrate for this enzyme may be peptidyl-tRNAs which drop off the ribosome during protein synthesis. This chain is Peptidyl-tRNA hydrolase, found in Sulfurisphaera tokodaii (strain DSM 16993 / JCM 10545 / NBRC 100140 / 7) (Sulfolobus tokodaii).